Consider the following 288-residue polypeptide: Fibroblast growth factor 2 (288 aa).

The interval 1-133 (MVGVGGGDVE…RGSRPGPAGT (133 aa)) is disordered. The propeptide at 1-142 (MVGVGGGDVE…TMAAGSITTL (142 aa)) is or 93, or 124, or 125, or 131, or 161. A compositionally biased stretch (low complexity) spans 52–64 (SVNPRSRAAGSPR). Positions 68–84 (RRTEERPSGSRLGDRGR) are enriched in basic and acidic residues. Arg108, Arg110, and Arg112 each carry omega-N-methylarginine; alternate. A symmetric dimethylarginine; alternate mark is found at Arg108, Arg110, and Arg112. The segment covering 113–132 (GTAAPRAAPAARGSRPGPAG) has biased composition (low complexity). Asn169 serves as a coordination point for heparin. The short motif at 179-181 (DGR) is the Cell attachment site; atypical element. Phosphotyrosine; by TEC is present on Tyr215. Residues 221–223 (DGR) carry the Cell attachment site; atypical motif. Lys228 participates in a covalent cross-link: Glycyl lysine isopeptide (Lys-Gly) (interchain with G-Cter in SUMO1). Residues 261–277 (KRTGQYKLGSKTGPGQK) form a heparin-binding region.

It belongs to the heparin-binding growth factors family. As to quaternary structure, monomer. Homodimer. Interacts with FGFR1, FGFR2, FGFR3 and FGFR4. Affinity between fibroblast growth factors (FGFs) and their receptors is increased by heparan sulfate glycosaminoglycans that function as coreceptors. Interacts with CSPG4, FGFBP1 and TEC. Found in a complex with FGFBP1, FGF1 and FGF2. Interacts with FGFBP3. Interacts with integrin ITGAV:ITGB3; the interaction is required for FGF2 signaling. Interacts with SNORC (via the extracellular domain). Interacts with glypican GPC3. Post-translationally, phosphorylation at Tyr-215 regulates FGF2 unconventional secretion. In terms of processing, several N-termini starting at positions 94, 125, 126, 132, 143 and 162 have been identified by direct sequencing. As to expression, expressed in granulosa and cumulus cells. Expressed in hepatocellular carcinoma cells, but not in non-cancerous liver tissue.

The protein localises to the secreted. It is found in the nucleus. Its function is as follows. Acts as a ligand for FGFR1, FGFR2, FGFR3 and FGFR4. Also acts as an integrin ligand which is required for FGF2 signaling. Binds to integrin ITGAV:ITGB3. Plays an important role in the regulation of cell survival, cell division, cell differentiation and cell migration. Functions as a potent mitogen in vitro. Can induce angiogenesis. Mediates phosphorylation of ERK1/2 and thereby promotes retinal lens fiber differentiation. The polypeptide is Fibroblast growth factor 2 (FGF2) (Homo sapiens (Human)).